The primary structure comprises 399 residues: MTKMDHKIVKTSYDGDAVSVEWDGGASAKFDNIWLRDNCHCSECYYDATKQRLLNSCSIPDDIAPIKVDSSPTKLKIVWNHEEHQSEYECRWLVIHSYNPRQIPVTEKVSGEREILAREYWTVKDMEGRLPSVDFKTVMASTDENEEPIKDWCLKIWKHGFCFIDNVPVDPQETEKLCEKLMYIRPTHYGGFWDFTSDLSKNDTAYTNIDISSHTDGTYWSDTPGLQLFHLLMHEGTGGTTSLVDAFHCAEILKKEHPESFELLTRIPVPAHSAGEEKVCIQPDIPQPIFKLDTNGELIQVRWNQSDRSTMDSWENPSEVVKFYRAIKQWHKIISDPANELFYQLRPGQCLIFDNWRCFHSRTEFTGKRRMCGAYINRDDFVSRLNLLNIGRQPVLDAI.

Positions 214, 216, and 360 each coordinate Fe cation.

It belongs to the gamma-BBH/TMLD family. The cofactor is Fe(2+). L-ascorbate serves as cofactor.

It localises to the cytoplasm. The catalysed reaction is N(6),N(6),N(6)-trimethyl-L-lysine + 2-oxoglutarate + O2 = (3S)-3-hydroxy-N(6),N(6),N(6)-trimethyl-L-lysine + succinate + CO2. The protein operates within amine and polyamine biosynthesis; carnitine biosynthesis. In terms of biological role, converts trimethyllysine (TML) into hydroxytrimethyllysine (HTML). This chain is Trimethyllysine dioxygenase, found in Meyerozyma guilliermondii (strain ATCC 6260 / CBS 566 / DSM 6381 / JCM 1539 / NBRC 10279 / NRRL Y-324) (Yeast).